The chain runs to 377 residues: Queuine tRNA-ribosyltransferase (377 aa).

Catalysis depends on aspartate 89, which acts as the Proton acceptor. Substrate contacts are provided by residues 89 to 93 (DSGGF), aspartate 143, glutamine 187, and glycine 214. The interval 245-251 (GVGKPED) is RNA binding. The Nucleophile role is filled by aspartate 264. The RNA binding; important for wobble base 34 recognition stretch occupies residues 269–273 (TRNAR). Zn(2+) is bound by residues cysteine 302, cysteine 304, cysteine 307, and histidine 333.

This sequence belongs to the queuine tRNA-ribosyltransferase family. Homodimer. Within each dimer, one monomer is responsible for RNA recognition and catalysis, while the other monomer binds to the replacement base PreQ1. It depends on Zn(2+) as a cofactor.

It carries out the reaction 7-aminomethyl-7-carbaguanine + guanosine(34) in tRNA = 7-aminomethyl-7-carbaguanosine(34) in tRNA + guanine. It participates in tRNA modification; tRNA-queuosine biosynthesis. Catalyzes the base-exchange of a guanine (G) residue with the queuine precursor 7-aminomethyl-7-deazaguanine (PreQ1) at position 34 (anticodon wobble position) in tRNAs with GU(N) anticodons (tRNA-Asp, -Asn, -His and -Tyr). Catalysis occurs through a double-displacement mechanism. The nucleophile active site attacks the C1' of nucleotide 34 to detach the guanine base from the RNA, forming a covalent enzyme-RNA intermediate. The proton acceptor active site deprotonates the incoming PreQ1, allowing a nucleophilic attack on the C1' of the ribose to form the product. After dissociation, two additional enzymatic reactions on the tRNA convert PreQ1 to queuine (Q), resulting in the hypermodified nucleoside queuosine (7-(((4,5-cis-dihydroxy-2-cyclopenten-1-yl)amino)methyl)-7-deazaguanosine). The chain is Queuine tRNA-ribosyltransferase from Shewanella sediminis (strain HAW-EB3).